Here is a 25-residue protein sequence, read N- to C-terminus: Unknown protein 7 (25 aa).

Residues 1-25 (MENGKVHVASMSGLSMPHMNEMLEK) are disordered.

This Pseudotsuga menziesii (Douglas-fir) protein is Unknown protein 7.